A 151-amino-acid polypeptide reads, in one-letter code: 3-dehydroquinate dehydratase (151 aa).

Catalysis depends on Tyr-26, which acts as the Proton acceptor. Substrate is bound by residues Asn-75, His-81, and Asp-88. The active-site Proton donor is His-101. Substrate contacts are provided by residues 102–103 (LS) and Arg-112.

The protein belongs to the type-II 3-dehydroquinase family. As to quaternary structure, homododecamer.

The enzyme catalyses 3-dehydroquinate = 3-dehydroshikimate + H2O. It functions in the pathway metabolic intermediate biosynthesis; chorismate biosynthesis; chorismate from D-erythrose 4-phosphate and phosphoenolpyruvate: step 3/7. Functionally, catalyzes a trans-dehydration via an enolate intermediate. The polypeptide is 3-dehydroquinate dehydratase (Shewanella sediminis (strain HAW-EB3)).